The following is a 224-amino-acid chain: Haloacetate dehalogenase H-2 (224 aa).

Asp10 (nucleophile) is an active-site residue.

It belongs to the HAD-like hydrolase superfamily. S-2-haloalkanoic acid dehalogenase family.

It catalyses the reaction a haloacetate + H2O = a halide anion + glycolate + H(+). This chain is Haloacetate dehalogenase H-2 (dehH2), found in Moraxella sp. (strain B).